The primary structure comprises 267 residues: Small ribosomal subunit protein uS3 (267 aa).

One can recognise a KH type-2 domain in the interval 38 to 106 (IRKLLATGME…QVQLNILEVK (69 aa)). Residues 215 to 267 (TAASAPAGDRDRPRRERPSRPRRSGSTGTTATSTEAGRAATAVVEAPAENQEG) are disordered. Positions 222 to 233 (GDRDRPRRERPS) are enriched in basic and acidic residues. Low complexity predominate over residues 238–256 (SGSTGTTATSTEAGRAATA).

Belongs to the universal ribosomal protein uS3 family. As to quaternary structure, part of the 30S ribosomal subunit. Forms a tight complex with proteins S10 and S14.

Binds the lower part of the 30S subunit head. Binds mRNA in the 70S ribosome, positioning it for translation. This chain is Small ribosomal subunit protein uS3, found in Nocardia farcinica (strain IFM 10152).